Consider the following 181-residue polypeptide: Cell division protein SepF (181 aa).

Positions 18–27 (EDYLDDDDYD) are enriched in acidic residues. Residues 18–42 (EDYLDDDDYDDGRAVGHDDRRAMHE) are disordered. Residues 28-42 (DGRAVGHDDRRAMHE) show a composition bias toward basic and acidic residues.

Belongs to the SepF family. As to quaternary structure, homodimer. Interacts with FtsZ.

It localises to the cytoplasm. Its function is as follows. Cell division protein that is part of the divisome complex and is recruited early to the Z-ring. Probably stimulates Z-ring formation, perhaps through the cross-linking of FtsZ protofilaments. Its function overlaps with FtsA. The protein is Cell division protein SepF of Frankia alni (strain DSM 45986 / CECT 9034 / ACN14a).